The primary structure comprises 78 residues: MIIPWQQVDSETLDNLLEAFVLREGTDYGEHERSLTEKVADVRRQLVSGEAVLVWSELHETINIMPRGSFHAGAEEQQ.

Belongs to the UPF0270 family.

The chain is UPF0270 protein YPTB3725 from Yersinia pseudotuberculosis serotype I (strain IP32953).